The primary structure comprises 276 residues: Flagellin FljJ (276 aa).

A disordered region spans residues 51 to 80 (RPGAGDMSGLAREDEPGSGDIDRGRGPRAG). The span at 61–75 (AREDEPGSGDIDRGR) shows a compositional bias: basic and acidic residues.

The protein belongs to the bacterial flagellin family. In C.crescentus, the flagellar filament is composed of multiple flagellins of 29 kDa; 27 kDa and 25 kDa.

Its subcellular location is the secreted. It localises to the bacterial flagellum. Functionally, flagellin is the subunit protein which polymerizes to form the filaments of bacterial flagella. This is Flagellin FljJ (fljJ) from Caulobacter vibrioides (strain ATCC 19089 / CIP 103742 / CB 15) (Caulobacter crescentus).